The primary structure comprises 190 residues: Guanylate kinase (190 aa).

The region spanning 8–186 is the Guanylate kinase-like domain; it reads ARPTVLTGPS…ALAELEKQMN (179 aa). Residue 15 to 22 coordinates ATP; that stretch reads GPSGVGKG.

This sequence belongs to the guanylate kinase family.

The protein localises to the cytoplasm. The catalysed reaction is GMP + ATP = GDP + ADP. The enzyme catalyses dZMP + ATP = dZDP + ADP. It functions in the pathway purine metabolism. Functionally, essential for recycling GMP and indirectly, cGMP. In terms of biological role, (Microbial infection) Catalyzes the phosphorylation of dZMP to dZDP, when the bacterium is infected by a phage that produces the substrate for the synthesis of dZTP (2- amino-2'-deoxyadenosine 5'-triphosphate), which is then used by the phage as a DNA polymerase substrate. This chain is Guanylate kinase, found in Synechococcus sp. (strain CC9311).